The following is a 71-amino-acid chain: Large ribosomal subunit protein uL29 (71 aa).

The disordered stretch occupies residues 1–20 (MKARELQELRQGSSPQDLQE).

This sequence belongs to the universal ribosomal protein uL29 family.

This is Large ribosomal subunit protein uL29 from Clostridium kluyveri (strain ATCC 8527 / DSM 555 / NBRC 12016 / NCIMB 10680 / K1).